Consider the following 160-residue polypeptide: Large ribosomal subunit protein uL16 (160 aa).

A disordered region spans residues 138 to 160 (INLSSDSSGEGKTGKDSKEEVKK). Residues 149 to 160 (KTGKDSKEEVKK) show a composition bias toward basic and acidic residues.

Belongs to the universal ribosomal protein uL16 family. In terms of assembly, part of the 50S ribosomal subunit.

Functionally, binds 23S rRNA and is also seen to make contacts with the A and possibly P site tRNAs. In Prochlorococcus marinus subsp. pastoris (strain CCMP1986 / NIES-2087 / MED4), this protein is Large ribosomal subunit protein uL16.